The primary structure comprises 110 residues: Parvalbumin alpha (110 aa).

At S2 the chain carries N-acetylserine. Residues S2 and S24 each carry the phosphoserine modification. EF-hand domains are found at residues 39–74 (KSAD…FSPD) and 78–110 (LSAK…VAES). Ca(2+) is bound by residues D52, D54, S56, F58, E60, E63, D91, D93, D95, K97, and E102.

Its function is as follows. In muscle, parvalbumin is thought to be involved in relaxation after contraction. It binds two calcium ions. The chain is Parvalbumin alpha (PVALB) from Homo sapiens (Human).